A 644-amino-acid polypeptide reads, in one-letter code: Large subunit GTPase 1 homolog (644 aa).

Positions 1–31 (MGRRRAPGGGSLGRVLIRQQTQRSRSHRHTD) are disordered. 2 positions are modified to phosphoserine: S93 and S97. The CP-type G domain occupies 164-430 (WRQLWRVIER…LCDCPGLVMP (267 aa)). Residue 212 to 215 (NKAD) participates in GTP binding. The disordered stretch occupies residues 253–345 (KEEVDSVAGD…KNAENQQVNN (93 aa)). Residues 302 to 326 (CQEDEEEDWQTCSEEDSVPEEEEGC) show a composition bias toward acidic residues. GTP-binding positions include 379 to 386 (GYPNVGKS) and 423 to 426 (DCPG). Positions 618 to 644 (VPGKPWKKHGNRNKKEKSRRLYKHLDV) are disordered. Basic residues predominate over residues 622 to 644 (PWKKHGNRNKKEKSRRLYKHLDV).

The protein belongs to the TRAFAC class YlqF/YawG GTPase family. LSG1 subfamily.

The protein resides in the cytoplasm. It localises to the endoplasmic reticulum. The protein localises to the nucleus. It is found in the cajal body. It catalyses the reaction GTP + H2O = GDP + phosphate + H(+). Functionally, functions as a GTPase. May act by mediating the release of NMD3 from the 60S ribosomal subunit after export into the cytoplasm during the 60S ribosomal subunit maturation. The chain is Large subunit GTPase 1 homolog from Mus musculus (Mouse).